Consider the following 424-residue polypeptide: Tubulin-specific chaperone cofactor E-like protein (424 aa).

Phosphoserine is present on residues Ser18 and Ser41. 7 LRR repeats span residues 73-98, 99-123, 124-147, 150-172, 173-197, 199-224, and 226-250; these read CAHV…IVSN, VPQL…TCAG, SFSG…HMIL, LPDL…PSIC, CHSL…KLGV, FPSL…SLAR, and FPNL…KLNS. The 42-residue stretch at 262 to 303 folds into the LRRCT domain; it reads IPLLQPYTTEERRKLVIARLPSVSKLNGSVVTDGEREDSERF. The region spanning 334 to 424 is the Ubiquitin-like domain; sequence AEVDLRPQSS…DKIYVESKTK (91 aa). A coiled-coil region spans residues 349 to 375; sequence HFNDQVEEMSIRLDQTVAELKKQLKTL.

In terms of tissue distribution, abundantly expressed in testis, but is also present in several tissues at a much lower level.

The protein localises to the cytoplasm. It localises to the cytoskeleton. Acts as a regulator of tubulin stability. The polypeptide is Tubulin-specific chaperone cofactor E-like protein (TBCEL) (Homo sapiens (Human)).